The following is a 603-amino-acid chain: Elongation factor 4 (603 aa).

Residues 7-189 form the tr-type G domain; sequence SRIRNFSIIA…SIVQLVPPPQ (183 aa). Residues 19 to 24 and 136 to 139 each bind GTP; these read DHGKST and NKID.

This sequence belongs to the TRAFAC class translation factor GTPase superfamily. Classic translation factor GTPase family. LepA subfamily.

Its subcellular location is the cell inner membrane. The enzyme catalyses GTP + H2O = GDP + phosphate + H(+). Required for accurate and efficient protein synthesis under certain stress conditions. May act as a fidelity factor of the translation reaction, by catalyzing a one-codon backward translocation of tRNAs on improperly translocated ribosomes. Back-translocation proceeds from a post-translocation (POST) complex to a pre-translocation (PRE) complex, thus giving elongation factor G a second chance to translocate the tRNAs correctly. Binds to ribosomes in a GTP-dependent manner. The sequence is that of Elongation factor 4 from Microcystis aeruginosa (strain NIES-843 / IAM M-2473).